The chain runs to 767 residues: Transducin-like enhancer protein 1 (767 aa).

Disordered stretches follow at residues 1–26 and 200–346; these read MFPQ…PPQS and ADAE…TSAS. Basic and acidic residues-rich tracts occupy residues 200 to 209, 235 to 255, and 277 to 289; these read ADAEHRERDP, RKTE…RSED, and NGVD…RKDP. The CCN domain stretch occupies residues 212-274; sequence SCLTLPNGER…SPHSVHSYSS (63 aa). Positions 294–306 are enriched in low complexity; it reads PNSMTSSSSVSPS. The span at 324–346 shows a compositional bias: polar residues; the sequence is LKSSTPNSQSDLNTPGPSGTSAS. WD repeat units lie at residues 467 to 498, 525 to 555, 569 to 599, 611 to 641, 693 to 723, and 734 to 764; these read GIPR…HVYT, NRDN…SIWD, SSAP…VVWD, GHTD…RCWD, LHES…NAWR, and KESS…TVYE.

The protein belongs to the WD repeat Groucho/TLE family. Ubiquitinated by XIAP/BIRC4. Abundantly expressed in brain, lung, testis and ovary in comparison with liver, heart, kidney and spleen. Ubiquitously expressed in the developing embryo. Present in unfertilized and fertilized eggs.

The protein localises to the nucleus. Functionally, nuclear effector molecule. This chain is Transducin-like enhancer protein 1 (esg1), found in Xenopus laevis (African clawed frog).